Here is a 181-residue protein sequence, read N- to C-terminus: RNA pyrophosphohydrolase (181 aa).

A Nudix hydrolase domain is found at 6–148 (GFRPNVGIIV…KRQVYRQALQ (143 aa)). A Nudix box motif is present at residues 38–59 (GGVEANETPLEALYRELREEVG).

The protein belongs to the Nudix hydrolase family. RppH subfamily. The cofactor is a divalent metal cation.

Accelerates the degradation of transcripts by removing pyrophosphate from the 5'-end of triphosphorylated RNA, leading to a more labile monophosphorylated state that can stimulate subsequent ribonuclease cleavage. This Halorhodospira halophila (strain DSM 244 / SL1) (Ectothiorhodospira halophila (strain DSM 244 / SL1)) protein is RNA pyrophosphohydrolase.